Reading from the N-terminus, the 231-residue chain is Somatolactin (231 aa).

The first 24 residues, 1–24 (MNMMTVKQQGVWAALLWPYLLTAS), serve as a signal peptide directing secretion. 3 disulfide bridges follow: C29-C39, C89-C205, and C222-C230. N-linked (GlcNAc...) asparagine glycosylation is present at N145.

This sequence belongs to the somatotropin/prolactin family. In terms of tissue distribution, pituitary gland.

It is found in the secreted. The polypeptide is Somatolactin (Paralichthys olivaceus (Bastard halibut)).